Consider the following 318-residue polypeptide: GTP cyclohydrolase MptA (318 aa).

This sequence belongs to the GTP cyclohydrolase IV family. In terms of assembly, homodimer. Fe(2+) is required as a cofactor.

It carries out the reaction GTP + H2O = 7,8-dihydroneopterin 2',3'-cyclic phosphate + formate + diphosphate + H(+). Its pathway is cofactor biosynthesis; 5,6,7,8-tetrahydromethanopterin biosynthesis. Its function is as follows. Converts GTP to 7,8-dihydro-D-neopterin 2',3'-cyclic phosphate, the first intermediate in the biosynthesis of coenzyme methanopterin. The polypeptide is GTP cyclohydrolase MptA (Methanosarcina mazei (strain ATCC BAA-159 / DSM 3647 / Goe1 / Go1 / JCM 11833 / OCM 88) (Methanosarcina frisia)).